Consider the following 206-residue polypeptide: Dephospho-CoA kinase (206 aa).

Residues 4–200 (IVALTGGIGS…AHYLQLASQF (197 aa)) form the DPCK domain. 12 to 17 (GSGKST) contacts ATP.

This sequence belongs to the CoaE family.

The protein resides in the cytoplasm. The enzyme catalyses 3'-dephospho-CoA + ATP = ADP + CoA + H(+). The protein operates within cofactor biosynthesis; coenzyme A biosynthesis; CoA from (R)-pantothenate: step 5/5. Catalyzes the phosphorylation of the 3'-hydroxyl group of dephosphocoenzyme A to form coenzyme A. In Shigella flexneri, this protein is Dephospho-CoA kinase.